Reading from the N-terminus, the 795-residue chain is Phenylalanine--tRNA ligase beta subunit (795 aa).

A tRNA-binding domain is found at 39-148 (AGTFNGVKVG…IDAPIGMDFR (110 aa)). The B5 domain occupies 401–476 (PKPNKVALRR…RIYGYDNIPN (76 aa)). Mg(2+)-binding residues include Asp-454, Asp-460, Glu-463, and Glu-464. An FDX-ACB domain is found at 701–794 (SKFPANRRDI…VSEKFGASLR (94 aa)).

It belongs to the phenylalanyl-tRNA synthetase beta subunit family. Type 1 subfamily. Tetramer of two alpha and two beta subunits. Mg(2+) serves as cofactor.

The protein localises to the cytoplasm. The catalysed reaction is tRNA(Phe) + L-phenylalanine + ATP = L-phenylalanyl-tRNA(Phe) + AMP + diphosphate + H(+). This Vibrio vulnificus (strain YJ016) protein is Phenylalanine--tRNA ligase beta subunit.